Consider the following 485-residue polypeptide: Glutamyl-tRNA(Gln) amidotransferase subunit A (485 aa).

Residues lysine 78 and serine 153 each act as charge relay system in the active site. Serine 177 acts as the Acyl-ester intermediate in catalysis.

It belongs to the amidase family. GatA subfamily. In terms of assembly, heterotrimer of A, B and C subunits.

The catalysed reaction is L-glutamyl-tRNA(Gln) + L-glutamine + ATP + H2O = L-glutaminyl-tRNA(Gln) + L-glutamate + ADP + phosphate + H(+). Functionally, allows the formation of correctly charged Gln-tRNA(Gln) through the transamidation of misacylated Glu-tRNA(Gln) in organisms which lack glutaminyl-tRNA synthetase. The reaction takes place in the presence of glutamine and ATP through an activated gamma-phospho-Glu-tRNA(Gln). The sequence is that of Glutamyl-tRNA(Gln) amidotransferase subunit A from Bacillus anthracis (strain A0248).